The following is a 259-amino-acid chain: 5'-nucleotidase SurE (259 aa).

Positions 8, 9, 39, and 93 each coordinate a divalent metal cation.

The protein belongs to the SurE nucleotidase family. A divalent metal cation is required as a cofactor.

The protein resides in the cytoplasm. The enzyme catalyses a ribonucleoside 5'-phosphate + H2O = a ribonucleoside + phosphate. Nucleotidase that shows phosphatase activity on nucleoside 5'-monophosphates. The chain is 5'-nucleotidase SurE from Thermococcus kodakarensis (strain ATCC BAA-918 / JCM 12380 / KOD1) (Pyrococcus kodakaraensis (strain KOD1)).